Here is a 286-residue protein sequence, read N- to C-terminus: Acetyl-coenzyme A carboxylase carboxyl transferase subunit beta (286 aa).

Residues 27-286 (LMTKCPKCKL…HSEETNHATI (260 aa)) form the CoA carboxyltransferase N-terminal domain. C31, C34, C50, and C52 together coordinate Zn(2+). Residues 31-52 (CPKCKLIQYTKQLEANLKVCVC) form a C4-type zinc finger.

The protein belongs to the AccD/PCCB family. As to quaternary structure, acetyl-CoA carboxylase is a heterohexamer composed of biotin carboxyl carrier protein (AccB), biotin carboxylase (AccC) and two subunits each of ACCase subunit alpha (AccA) and ACCase subunit beta (AccD). Requires Zn(2+) as cofactor.

It localises to the cytoplasm. It catalyses the reaction N(6)-carboxybiotinyl-L-lysyl-[protein] + acetyl-CoA = N(6)-biotinyl-L-lysyl-[protein] + malonyl-CoA. The protein operates within lipid metabolism; malonyl-CoA biosynthesis; malonyl-CoA from acetyl-CoA: step 1/1. Functionally, component of the acetyl coenzyme A carboxylase (ACC) complex. Biotin carboxylase (BC) catalyzes the carboxylation of biotin on its carrier protein (BCCP) and then the CO(2) group is transferred by the transcarboxylase to acetyl-CoA to form malonyl-CoA. The polypeptide is Acetyl-coenzyme A carboxylase carboxyl transferase subunit beta (Exiguobacterium sibiricum (strain DSM 17290 / CCUG 55495 / CIP 109462 / JCM 13490 / 255-15)).